Reading from the N-terminus, the 147-residue chain is Small ribosomal subunit protein uS12 (147 aa).

This sequence belongs to the universal ribosomal protein uS12 family. In terms of assembly, part of the 30S ribosomal subunit.

Functionally, with S4 and S5 plays an important role in translational accuracy. Located at the interface of the 30S and 50S subunits. The protein is Small ribosomal subunit protein uS12 of Sulfolobus acidocaldarius (strain ATCC 33909 / DSM 639 / JCM 8929 / NBRC 15157 / NCIMB 11770).